The following is a 407-amino-acid chain: CCCH-type zinc finger protein oma-1 (407 aa).

A disordered region spans residues 1 to 39 (MNVNGENNEKIDEHHLESSLAGVPTLPVSPLDHAKDLSQ). The span at 7 to 17 (NNEKIDEHHLE) shows a compositional bias: basic and acidic residues. The interval 46 to 80 (IGDLVTQTANLIAIKKQLLEDIAFNQHIQSMQVRA) is required for taf-4 binding. C3H1-type zinc fingers lie at residues 112–140 (SYKTVICQAWLESKTCSFADNCRFAHGEE) and 154–182 (KYKTKLCDKYTTTGLCPYGKRCLFIHPDH). Threonine 239 carries the phosphothreonine; by mbk-2 and GSK3 modification. Phosphoserine; by mbk-2 is present on serine 302. A Phosphothreonine; by GSK3 modification is found at threonine 339.

In terms of assembly, interacts with taf-4 (via C-terminus). Interacts with ifet-1. Component of a ribonucleoprotein particle complex that interacts with cgh-1 and car-1 in an RNA-dependent manner. Association with many proteins is dependent on the presence of RNA. Post-translationally, phosphorylation by mbk-2 and by gsk-3 are required for its rapid degradation following meiosis II. As to expression, exclusively expressed in the hermaphrodite gonad. Expressed prior to oocyte division. Widely distributed throughout gonadal oocytes from the mitotic stage to the developing diakinesis stage. Expressed in sperm.

It localises to the cytoplasm. It is found in the cytoplasmic granule. The protein resides in the nucleus. Its function is as follows. Zinc-finger RNA-binding protein that binds to 5'-UA[AU]-3' motifs in the 3'-UTR of maternal mRNAs to suppress translation in oocytes and embryos. Acts as a ribonucleoprotein particle component that may exert part of its function within cytoplasmic foci of unfertilized oocytes. Acts redundantly with oma-2 to control the temporal expression and distribution of maternal proteins and thereby promote meiotic progression, oocyte maturation, fertilization and embryonic development. Recruits the translational repressor ifet-1 to the 3'-UTR of mei-1 and zif-1 to negatively regulate their translation. By suppressing the translation of the E3 ligase zif-1, may in turn play a role in the stabilization of zif-1 targets such as the maternal transcriptional repressor protein pie-1. Following fertilization, sequesters the transcription initiation factor, taf-4, in the cytoplasm, which prevents its nuclear localization and thus allows for transcriptional suppression in early embryos, but not in oocytes. Also, together with oma-2, is involved in P-granule distribution during embryonic development. The polypeptide is CCCH-type zinc finger protein oma-1 (Caenorhabditis elegans).